The following is a 724-amino-acid chain: Catalase-peroxidase (724 aa).

Positions 96–225 (WHAAGTYRVA…LAAVMMGLIY (130 aa)) form a cross-link, tryptophyl-tyrosyl-methioninium (Trp-Tyr) (with M-251). Residue histidine 97 is the Proton acceptor of the active site. Residues 225–251 (YVNPEGVDGNPDPLRTAEDVRITFERM) constitute a cross-link (tryptophyl-tyrosyl-methioninium (Tyr-Met) (with W-96)). Residue histidine 266 coordinates heme b.

It belongs to the peroxidase family. Peroxidase/catalase subfamily. In terms of assembly, homodimer or homotetramer. It depends on heme b as a cofactor. Post-translationally, formation of the three residue Trp-Tyr-Met cross-link is important for the catalase, but not the peroxidase activity of the enzyme.

The enzyme catalyses H2O2 + AH2 = A + 2 H2O. It carries out the reaction 2 H2O2 = O2 + 2 H2O. Bifunctional enzyme with both catalase and broad-spectrum peroxidase activity. This Halorhodospira halophila (strain DSM 244 / SL1) (Ectothiorhodospira halophila (strain DSM 244 / SL1)) protein is Catalase-peroxidase.